We begin with the raw amino-acid sequence, 83 residues long: Hainantoxin-III 5 (83 aa).

Positions 1 to 21 (MKASRFLALAGLVLLFVVGYA) are cleaved as a signal peptide. The propeptide occupies 22–48 (SESEEKEFPRELLSKIFAVDDFKGEER). Disulfide bonds link Cys-50/Cys-65, Cys-57/Cys-70, and Cys-64/Cys-77. Leucine amide is present on Leu-81.

Belongs to the neurotoxin 10 (Hwtx-1) family. 15 (Hntx-3) subfamily. In terms of assembly, monomer. In terms of tissue distribution, expressed by the venom gland.

Its subcellular location is the secreted. Its function is as follows. Selective antagonist of neuronal tetrodotoxin (TTX)-sensitive voltage-gated sodium channels (IC(50)=1270 nM on Nav1.1/SCN1A, 270 nM on Nav1.2/SCN2A, 491 nM on Nav1.3/SCN3A and 232 nM on Nav1.7/SCN9A). This toxin suppress Nav1.7 current amplitude without significantly altering the activation, inactivation, and repriming kinetics. Short extreme depolarizations partially activate the toxin-bound channel, indicating voltage-dependent inhibition of this toxin. This toxin increases the deactivation of the Nav1.7 current after extreme depolarizations. The toxin-Nav1.7 complex is gradually dissociated upon prolonged strong depolarizations in a voltage-dependent manner, and the unbound toxin rebinds to Nav1.7 after a long repolarization. Moreover, analysis of chimeric channels showed that the DIIS3-S4 linker is critical for toxin binding to Nav1.7. These data are consistent with this toxin interacting with Nav1.7 site 4 and trapping the domain II voltage sensor in the closed state. The sequence is that of Hainantoxin-III 5 from Cyriopagopus hainanus (Chinese bird spider).